Reading from the N-terminus, the 563-residue chain is Arginine--tRNA ligase (563 aa).

Residues 134–144 carry the 'HIGH' region motif; it reads ANPTGLLHMGN.

It belongs to the class-I aminoacyl-tRNA synthetase family. In terms of assembly, monomer.

It is found in the cytoplasm. It carries out the reaction tRNA(Arg) + L-arginine + ATP = L-arginyl-tRNA(Arg) + AMP + diphosphate. The protein is Arginine--tRNA ligase of Heliobacterium modesticaldum (strain ATCC 51547 / Ice1).